The primary structure comprises 158 residues: SKP1-like protein 18 (158 aa).

The interval 99–157 is interaction with the F-box domain of F-box proteins; the sequence is ILAANYLNFEGLLGFASQTVADYIKDKTPEEVREIFNIENDFTPEEEEEIRKENAWTFN.

Belongs to the SKP1 family. As to quaternary structure, part of a SCF (SKP1-cullin-F-box) protein ligase complex. Interacts with CPR1/CPR30, EBF1, SKP2A, At3g61590, At4g38940 and At5g49610. In terms of tissue distribution, expressed in young seedlings, roots, leaves, floral stems, inflorescences, pollen, and siliques.

It is found in the nucleus. Its pathway is protein modification; protein ubiquitination. Involved in ubiquitination and subsequent proteasomal degradation of target proteins. Together with CUL1, RBX1 and a F-box protein, it forms a SCF E3 ubiquitin ligase complex. The functional specificity of this complex depends on the type of F-box protein. In the SCF complex, it serves as an adapter that links the F-box protein to CUL1. This chain is SKP1-like protein 18 (ASK18), found in Arabidopsis thaliana (Mouse-ear cress).